The sequence spans 385 residues: MARENGESSSSWKKQAEDIKKIFEFKETLGTGAFSEVVLAEEKATGKLFAVKCIPKKALKGKESSIENEIAVLRKIKHENIVALEDIYESPNHLYLVMQLVSGGELFDRIVEKGFYTEKDASTLIRQVLDAVYYLHRMGIVHRDLKPENLLYYSQDEESKIMISDFGLSKMEGKGDVMSTACGTPGYVAPEVLAQKPYSKAVDCWSIGVIAYILLCGYPPFYDENDSKLFEQILKAEYEFDSPYWDDISDSAKDFIRNLMEKDPNKRYTCEQAARHPWIAGDTALSKNIHESVSAQIRKNFAKSKWRQAFNATAVVRHMRRLQLGSSLDSSNASVSSNLSLASQKDCLAPSTLCSFLSSSSGVAGVGAERRPRPTTVTTGHTGSK.

The region spanning 23-279 (FEFKETLGTG…CEQAARHPWI (257 aa)) is the Protein kinase domain. Residues 29-37 (LGTGAFSEV) and Lys-52 contribute to the ATP site. Lys-113 participates in a covalent cross-link: Glycyl lysine isopeptide (Lys-Gly) (interchain with G-Cter in SUMO2). Ser-122 is modified (phosphoserine). Asp-144 serves as the catalytic Proton acceptor. Residue Thr-180 is modified to Phosphothreonine; by CaMKK1 and CaMKK2. The tract at residues 279–319 (IAGDTALSKNIHESVSAQIRKNFAKSKWRQAFNATAVVRHM) is autoinhibitory domain. Residues 299 to 320 (KNFAKSKWRQAFNATAVVRHMR) are calmodulin-binding. The short motif at 318-324 (HMRRLQL) is the Nuclear export signal element. The interval 363–385 (VAGVGAERRPRPTTVTTGHTGSK) is disordered. Residues 375–385 (TTVTTGHTGSK) are compositionally biased toward polar residues.

It belongs to the protein kinase superfamily. CAMK Ser/Thr protein kinase family. CaMK subfamily. As to expression, expressed ubiquitously with high levels in brain and low levels in kidney. Isoform 2 is highly expressed in brain compared to other tissues. In hematopoietic cell lines predominant expression was detected in T and EC cells.

It localises to the cytoplasm. The protein resides in the nucleus. The enzyme catalyses L-seryl-[protein] + ATP = O-phospho-L-seryl-[protein] + ADP + H(+). The catalysed reaction is L-threonyl-[protein] + ATP = O-phospho-L-threonyl-[protein] + ADP + H(+). Its activity is regulated as follows. Activated by Ca(2+)/calmodulin. Binding of calmodulin results in conformational change that relieves intrasteric autoinhibition and allows phosphorylation of Thr-180 within the activation loop by CaMKK1 or CaMKK2. Phosphorylation of Thr-180 results in several fold increase in total activity. Unlike CaMK4, may be unable to exhibit autonomous activity after Ca(2+)/calmodulin activation. In terms of biological role, calcium/calmodulin-dependent protein kinase that operates in the calcium-triggered CaMKK-CaMK1 signaling cascade and, upon calcium influx, activates CREB-dependent gene transcription, regulates calcium-mediated granulocyte function and respiratory burst and promotes basal dendritic growth of hippocampal neurons. In neutrophil cells, required for cytokine-induced proliferative responses and activation of the respiratory burst. Activates the transcription factor CREB1 in hippocampal neuron nuclei. May play a role in apoptosis of erythroleukemia cells. In vitro, phosphorylates transcription factor CREM isoform Beta. Isoform 1 but not isoform 2 activates CREB1. The chain is Calcium/calmodulin-dependent protein kinase type 1D (Camk1d) from Mus musculus (Mouse).